The primary structure comprises 160 residues: MRHRNAGYKLGRNTSHRRALLRNLVTSILMEDRVETTITKAKAARPHVEKLITLGKKGDVHSRRQALAYLQTREAVTRLFDTVAPRYGDRNGGYLRIVRSGFQRGDGAEKAFIELLGAEQELDEKRQKRAEARAKRREEMQKAMAEQQQAEGGEPEGGNE.

The span at 123-141 shows a compositional bias: basic and acidic residues; that stretch reads DEKRQKRAEARAKRREEMQ. Residues 123–160 form a disordered region; the sequence is DEKRQKRAEARAKRREEMQKAMAEQQQAEGGEPEGGNE. Positions 142-152 are enriched in low complexity; the sequence is KAMAEQQQAEG.

Belongs to the bacterial ribosomal protein bL17 family. In terms of assembly, part of the 50S ribosomal subunit. Contacts protein L32.

The chain is Large ribosomal subunit protein bL17 from Acidobacterium capsulatum (strain ATCC 51196 / DSM 11244 / BCRC 80197 / JCM 7670 / NBRC 15755 / NCIMB 13165 / 161).